We begin with the raw amino-acid sequence, 226 residues long: Cytidylate kinase (226 aa).

Residue 9-17 (GPAGAGKST) coordinates ATP.

It belongs to the cytidylate kinase family. Type 1 subfamily.

The protein localises to the cytoplasm. It carries out the reaction CMP + ATP = CDP + ADP. The enzyme catalyses dCMP + ATP = dCDP + ADP. This Clostridium tetani (strain Massachusetts / E88) protein is Cytidylate kinase.